We begin with the raw amino-acid sequence, 143 residues long: Large ribosomal subunit protein uL11 (143 aa).

The protein belongs to the universal ribosomal protein uL11 family. Part of the ribosomal stalk of the 50S ribosomal subunit. Interacts with L10 and the large rRNA to form the base of the stalk. L10 forms an elongated spine to which L12 dimers bind in a sequential fashion forming a multimeric L10(L12)X complex. One or more lysine residues are methylated.

Its function is as follows. Forms part of the ribosomal stalk which helps the ribosome interact with GTP-bound translation factors. In Variovorax paradoxus (strain S110), this protein is Large ribosomal subunit protein uL11.